A 459-amino-acid polypeptide reads, in one-letter code: ATP-dependent 6-phosphofructokinase (459 aa).

ATP contacts are provided by residues G89, 154–155 (RG), and 179–182 (GDGG). Mg(2+) is bound at residue D180. Residues 208–210 (TID), 253–255 (MGR), E309, and 368–371 (YAIR) each bind substrate. D210 serves as the catalytic Proton acceptor.

It belongs to the phosphofructokinase type A (PFKA) family. PPi-dependent PFK group II subfamily. Atypical ATP-dependent clade 'X' sub-subfamily. Homodimer. Requires Mg(2+) as cofactor.

It is found in the cytoplasm. It catalyses the reaction beta-D-fructose 6-phosphate + ATP = beta-D-fructose 1,6-bisphosphate + ADP + H(+). It participates in carbohydrate degradation; glycolysis; D-glyceraldehyde 3-phosphate and glycerone phosphate from D-glucose: step 3/4. With respect to regulation, AMP causes 20-40% inhibition and diphosphate causes 20-50% inhibition. ADP, citrate, PEP and FBP have no effect. Its function is as follows. Catalyzes the phosphorylation of D-fructose 6-phosphate to fructose 1,6-bisphosphate by ATP, the first committing step of glycolysis. This is ATP-dependent 6-phosphofructokinase from Amycolatopsis methanolica.